We begin with the raw amino-acid sequence, 472 residues long: E3 ubiquitin-protein ligase MYLIP-A (472 aa).

The region spanning 1–279 (MLCHVTRPDA…ETHAFYRCDT (279 aa)) is the FERM domain. The RING-type zinc finger occupies 384–419 (CMLCCEEEIDAAFCPCGHMVCCQNCAAQLQSCPVCR).

Interacts with anxa5. Ubiquitous.

Its subcellular location is the cytoplasm. It localises to the cytosol. It carries out the reaction S-ubiquitinyl-[E2 ubiquitin-conjugating enzyme]-L-cysteine + [acceptor protein]-L-lysine = [E2 ubiquitin-conjugating enzyme]-L-cysteine + N(6)-ubiquitinyl-[acceptor protein]-L-lysine.. It functions in the pathway protein modification; protein ubiquitination. Functionally, E3 ubiquitin-protein ligase that mediates ubiquitination and subsequent proteasomal degradation of myosin regulatory light chain (MRLC). Regulates cell movements during gastrulation by acting downstream of fz7 to antagonize the frizzled-signaling pathway. In Danio rerio (Zebrafish), this protein is E3 ubiquitin-protein ligase MYLIP-A (mylipa).